Consider the following 125-residue polypeptide: Protein ApaG (125 aa).

The ApaG domain occupies M1–H125.

This is Protein ApaG from Klebsiella pneumoniae (strain 342).